The following is a 401-amino-acid chain: Probable trafficking protein particle complex subunit 13 homolog (401 aa).

It belongs to the TRAPPC13 family.

The chain is Probable trafficking protein particle complex subunit 13 homolog from Caenorhabditis elegans.